The sequence spans 455 residues: Phosphoglucosamine mutase (455 aa).

Residue serine 108 is the Phosphoserine intermediate of the active site. Residues serine 108, aspartate 246, aspartate 248, and aspartate 250 each contribute to the Mg(2+) site. The residue at position 108 (serine 108) is a Phosphoserine.

The protein belongs to the phosphohexose mutase family. Mg(2+) serves as cofactor. Post-translationally, activated by phosphorylation.

The catalysed reaction is alpha-D-glucosamine 1-phosphate = D-glucosamine 6-phosphate. Catalyzes the conversion of glucosamine-6-phosphate to glucosamine-1-phosphate. This is Phosphoglucosamine mutase from Frankia alni (strain DSM 45986 / CECT 9034 / ACN14a).